The sequence spans 788 residues: Endonuclease MutS2 (788 aa).

332 to 339 (GPNTGGKT) contacts ATP. Residues 713–788 (VDLRGMDAEE…GTGVTVVEIK (76 aa)) enclose the Smr domain.

The protein belongs to the DNA mismatch repair MutS family. MutS2 subfamily. Homodimer. Binds to stalled ribosomes, contacting rRNA.

Its function is as follows. Endonuclease that is involved in the suppression of homologous recombination and thus may have a key role in the control of bacterial genetic diversity. Acts as a ribosome collision sensor, splitting the ribosome into its 2 subunits. Detects stalled/collided 70S ribosomes which it binds and splits by an ATP-hydrolysis driven conformational change. Acts upstream of the ribosome quality control system (RQC), a ribosome-associated complex that mediates the extraction of incompletely synthesized nascent chains from stalled ribosomes and their subsequent degradation. Probably generates substrates for RQC. The sequence is that of Endonuclease MutS2 from Clostridium botulinum (strain Loch Maree / Type A3).